A 94-amino-acid polypeptide reads, in one-letter code: Co-chaperonin GroES (94 aa).

It belongs to the GroES chaperonin family. In terms of assembly, heptamer of 7 subunits arranged in a ring. Interacts with the chaperonin GroEL.

The protein localises to the cytoplasm. In terms of biological role, together with the chaperonin GroEL, plays an essential role in assisting protein folding. The GroEL-GroES system forms a nano-cage that allows encapsulation of the non-native substrate proteins and provides a physical environment optimized to promote and accelerate protein folding. GroES binds to the apical surface of the GroEL ring, thereby capping the opening of the GroEL channel. The chain is Co-chaperonin GroES from Alkaliphilus metalliredigens (strain QYMF).